The following is a 437-amino-acid chain: GTPase Der (437 aa).

EngA-type G domains lie at 3 to 167 (NLVA…SKEG) and 176 to 352 (PRFA…QART). GTP contacts are provided by residues 9 to 16 (GRPNVGKS), 56 to 60 (DTGGW), 119 to 122 (NKTD), 182 to 189 (GRPNAGKS), 229 to 233 (DTAGI), and 294 to 297 (NKWD). The region spanning 353 to 437 (TRIPTARLNE…TPINIFIRQK (85 aa)) is the KH-like domain.

This sequence belongs to the TRAFAC class TrmE-Era-EngA-EngB-Septin-like GTPase superfamily. EngA (Der) GTPase family. Associates with the 50S ribosomal subunit.

Functionally, GTPase that plays an essential role in the late steps of ribosome biogenesis. This is GTPase Der from Phocaeicola vulgatus (strain ATCC 8482 / DSM 1447 / JCM 5826 / CCUG 4940 / NBRC 14291 / NCTC 11154) (Bacteroides vulgatus).